We begin with the raw amino-acid sequence, 246 residues long: Endonuclease NucS (246 aa).

It belongs to the NucS endonuclease family.

It is found in the cytoplasm. Functionally, cleaves both 3' and 5' ssDNA extremities of branched DNA structures. This chain is Endonuclease NucS, found in Corynebacterium urealyticum (strain ATCC 43042 / DSM 7109).